A 511-amino-acid chain; its full sequence is Cobyric acid synthase (511 aa).

Residues 251–443 form the GATase cobBQ-type domain; the sequence is LLDIAIICLP…IHGIFDNDVF (193 aa). The Nucleophile role is filled by Cys332. Residue His435 is part of the active site.

This sequence belongs to the CobB/CobQ family. CobQ subfamily.

Its pathway is cofactor biosynthesis; adenosylcobalamin biosynthesis. In terms of biological role, catalyzes amidations at positions B, D, E, and G on adenosylcobyrinic A,C-diamide. NH(2) groups are provided by glutamine, and one molecule of ATP is hydrogenolyzed for each amidation. The polypeptide is Cobyric acid synthase (Listeria monocytogenes serovar 1/2a (strain ATCC BAA-679 / EGD-e)).